Consider the following 184-residue polypeptide: Ribosome maturation factor RimM (184 aa).

The region spanning 111–184 is the PRC barrel domain; sequence DDEFYWVDLI…HIVVDWGLDY (74 aa).

It belongs to the RimM family. Binds ribosomal protein uS19.

It is found in the cytoplasm. Functionally, an accessory protein needed during the final step in the assembly of 30S ribosomal subunit, possibly for assembly of the head region. Essential for efficient processing of 16S rRNA. May be needed both before and after RbfA during the maturation of 16S rRNA. It has affinity for free ribosomal 30S subunits but not for 70S ribosomes. This chain is Ribosome maturation factor RimM, found in Ralstonia nicotianae (strain ATCC BAA-1114 / GMI1000) (Ralstonia solanacearum).